A 399-amino-acid chain; its full sequence is Mitochondrial glycine transporter (399 aa).

3 Solcar repeats span residues 35-137 (IPPY…LRSV), 164-251 (LSTT…CKTN), and 266-374 (GNWM…GRSW). The next 6 membrane-spanning stretches (helical) occupy residues 41-66 (LAFG…TRLQ), 112-138 (GTAP…RSVA), 170-195 (LLTG…ARFE), 226-249 (GFTA…EACK), 270-296 (VVSA…KTRM), and 349-367 (GLGL…GWSI). The segment at 379–399 (EASSSAQEAGTGTRLLDHKQV) is disordered.

This sequence belongs to the mitochondrial carrier (TC 2.A.29) family. SLC25A38 subfamily.

The protein resides in the mitochondrion inner membrane. It catalyses the reaction glycine(in) = glycine(out). Mitochondrial glycine transporter that imports glycine into the mitochondrial matrix. Plays an important role in providing glycine for the first enzymatic step in heme biosynthesis, the condensation of glycine with succinyl-CoA to produce 5-aminolevulinate (ALA) in the mitochondrial matrix. The protein is Mitochondrial glycine transporter of Mycosarcoma maydis (Corn smut fungus).